A 449-amino-acid polypeptide reads, in one-letter code: Glucose-6-phosphate isomerase (449 aa).

E291 serves as the catalytic Proton donor. Catalysis depends on residues H312 and K426.

It belongs to the GPI family.

The protein resides in the cytoplasm. The enzyme catalyses alpha-D-glucose 6-phosphate = beta-D-fructose 6-phosphate. It functions in the pathway carbohydrate biosynthesis; gluconeogenesis. It participates in carbohydrate degradation; glycolysis; D-glyceraldehyde 3-phosphate and glycerone phosphate from D-glucose: step 2/4. Its function is as follows. Catalyzes the reversible isomerization of glucose-6-phosphate to fructose-6-phosphate. The polypeptide is Glucose-6-phosphate isomerase (Streptococcus pyogenes serotype M5 (strain Manfredo)).